Reading from the N-terminus, the 367-residue chain is 2'-5'-oligoadenylate synthase 1A (367 aa).

The interval 14 to 61 is interaction with dsRNA; the sequence is DKFIEDYLLPDTTFGADVKSAVNVVCDFLKERCFQGAAHPVRVSKVVK. Residue Ser64 participates in ATP binding. Mg(2+)-binding residues include Asp76, Asp78, and Asp149. An interaction with dsRNA region spans residues 201 to 211; that stretch reads QRPTKLKSLIR. Residues Arg211, Lys214, and Gln231 each contribute to the ATP site. Cys364 carries S-geranylgeranyl cysteine lipidation.

Belongs to the 2-5A synthase family. In terms of assembly, monomer. Homotetramer. Interacts with OAS1D; the interaction inhibits OAS1A catalytic activity. Mg(2+) serves as cofactor. In terms of processing, C-terminal prenylated. As to expression, expressed in oocytes and granulosa cells of ovary, in intestine, stomach, spleen and uterus (at protein level). Expressed at high levels in the digestive tract and lymphoid organs. Expressed in ovary and spleen.

The protein localises to the cytoplasm. It localises to the mitochondrion. The protein resides in the nucleus. It is found in the microsome. Its subcellular location is the endoplasmic reticulum. It catalyses the reaction 3 ATP = 5'-triphosphoadenylyl-(2'-&gt;5')-adenylyl-(2'-&gt;5')-adenosine + 2 diphosphate. Produced as a latent enzyme which is activated by dsRNA generated during the course of viral infection. The dsRNA activator must be at least 15 nucleotides long, and no modification of the 2'-hydroxyl group is tolerated. ssRNA or dsDNA do not act as activators. In terms of biological role, interferon-induced, dsRNA-activated antiviral enzyme which plays a critical role in cellular innate antiviral response. In addition, it may also play a role in other cellular processes such as apoptosis, cell growth, differentiation and gene regulation. Synthesizes higher oligomers of 2'-5'-oligoadenylates (2-5A) from ATP which then bind to the inactive monomeric form of ribonuclease L (RNase L) leading to its dimerization and subsequent activation. Activation of RNase L leads to degradation of cellular as well as viral RNA, resulting in the inhibition of protein synthesis, thus terminating viral replication. Can mediate the antiviral effect via the classical RNase L-dependent pathway or an alternative antiviral pathway independent of RNase L. The sequence is that of 2'-5'-oligoadenylate synthase 1A (Oas1a) from Mus musculus (Mouse).